Here is a 464-residue protein sequence, read N- to C-terminus: Cysteine--tRNA ligase (464 aa).

Residue Cys28 participates in Zn(2+) binding. The 'HIGH' region signature appears at 30-40 (PTVYDTAHIGN). Zn(2+)-binding residues include Cys212, His237, and Glu241. Residues 270–274 (KMSKS) carry the 'KMSKS' region motif. Residue Lys273 participates in ATP binding.

It belongs to the class-I aminoacyl-tRNA synthetase family. In terms of assembly, monomer. It depends on Zn(2+) as a cofactor.

Its subcellular location is the cytoplasm. The catalysed reaction is tRNA(Cys) + L-cysteine + ATP = L-cysteinyl-tRNA(Cys) + AMP + diphosphate. The protein is Cysteine--tRNA ligase of Wolbachia pipientis subsp. Culex pipiens (strain wPip).